A 673-amino-acid chain; its full sequence is DNA ligase (673 aa).

NAD(+) contacts are provided by residues 33 to 37 (DHQYD), 83 to 84 (SL), and E117. The N6-AMP-lysine intermediate role is filled by K119. NAD(+)-binding residues include R140, E175, K282, and K306. Zn(2+) is bound by residues C400, C403, C418, and C424. Residues 592–673 (RGSSAISGKT…WVKMVEDARS (82 aa)) form the BRCT domain.

Belongs to the NAD-dependent DNA ligase family. LigA subfamily. Mg(2+) serves as cofactor. It depends on Mn(2+) as a cofactor.

It carries out the reaction NAD(+) + (deoxyribonucleotide)n-3'-hydroxyl + 5'-phospho-(deoxyribonucleotide)m = (deoxyribonucleotide)n+m + AMP + beta-nicotinamide D-nucleotide.. In terms of biological role, DNA ligase that catalyzes the formation of phosphodiester linkages between 5'-phosphoryl and 3'-hydroxyl groups in double-stranded DNA using NAD as a coenzyme and as the energy source for the reaction. It is essential for DNA replication and repair of damaged DNA. The protein is DNA ligase of Anaplasma marginale (strain St. Maries).